A 347-amino-acid chain; its full sequence is UDP-N-acetylenolpyruvoylglucosamine reductase (347 aa).

The FAD-binding PCMH-type domain maps to 23–197 (LPARAARLLR…LRVRFRLPQA (175 aa)). Arg-174 is a catalytic residue. Residue Ser-247 is the Proton donor of the active site. Residue Glu-343 is part of the active site.

This sequence belongs to the MurB family. The cofactor is FAD.

It is found in the cytoplasm. It catalyses the reaction UDP-N-acetyl-alpha-D-muramate + NADP(+) = UDP-N-acetyl-3-O-(1-carboxyvinyl)-alpha-D-glucosamine + NADPH + H(+). The protein operates within cell wall biogenesis; peptidoglycan biosynthesis. Functionally, cell wall formation. This Azoarcus sp. (strain BH72) protein is UDP-N-acetylenolpyruvoylglucosamine reductase.